The following is a 94-amino-acid chain: Co-chaperonin GroES (94 aa).

Belongs to the GroES chaperonin family. In terms of assembly, heptamer of 7 subunits arranged in a ring. Interacts with the chaperonin GroEL.

It localises to the cytoplasm. In terms of biological role, together with the chaperonin GroEL, plays an essential role in assisting protein folding. The GroEL-GroES system forms a nano-cage that allows encapsulation of the non-native substrate proteins and provides a physical environment optimized to promote and accelerate protein folding. GroES binds to the apical surface of the GroEL ring, thereby capping the opening of the GroEL channel. The chain is Co-chaperonin GroES from Listeria welshimeri serovar 6b (strain ATCC 35897 / DSM 20650 / CCUG 15529 / CIP 8149 / NCTC 11857 / SLCC 5334 / V8).